Reading from the N-terminus, the 659-residue chain is UDP-glucuronate:xylan alpha-glucuronosyltransferase 1 (659 aa).

Residues 1 to 14 show a composition bias toward low complexity; the sequence is MANSPAAPAPTTTT. The disordered stretch occupies residues 1-20; it reads MANSPAAPAPTTTTGGDSRR. A helical; Signal-anchor for type II membrane protein transmembrane segment spans residues 70–90; the sequence is FQIVKLLLFILLSATLFTIIY. Asp416 and Asp418 together coordinate Mn(2+). Residues 416 to 418, 445 to 447, 472 to 476, and 526 to 531 contribute to the substrate site; these read DAD, NSG, NGGDQ, and HYLGMK. Residue His526 coordinates Mn(2+).

The protein belongs to the glycosyltransferase 8 family. Glycogenin subfamily. The cofactor is Mn(2+).

It is found in the golgi apparatus membrane. Its function is as follows. Glycosyltransferase required for the addition of both glucuronic acid and 4-O-methylglucuronic acid branches to xylan in stem cell walls. In association with GUX2, is responsible for almost all of the substitutions of the xylan backbone in stem glucuronoxylan. This is UDP-glucuronate:xylan alpha-glucuronosyltransferase 1 (GUX1) from Arabidopsis thaliana (Mouse-ear cress).